The primary structure comprises 1139 residues: Exportin-T (1139 aa).

A disordered region spans residues A562–S589. The segment covering S572 to S589 has biased composition (polar residues).

This sequence belongs to the exportin family.

Its subcellular location is the nucleus. It localises to the cytoplasm. Its function is as follows. tRNA nucleus export receptor which facilitates tRNA translocation across the nuclear pore complex. Involved in pre-tRNA splicing, probably by affecting the interaction of pre-tRNA with splicing endonuclease. This Cryptococcus neoformans var. neoformans serotype D (strain B-3501A) (Filobasidiella neoformans) protein is Exportin-T (LOS1).